Consider the following 185-residue polypeptide: HTH-type transcriptional regulator SACOL2593 (185 aa).

An HTH tetR-type domain is found at 6–66 (KENRQRIEEI…YVIQRDLDIF (61 aa)). Residues 29 to 48 (SMNRIAKELGIGMGTLYRHF) constitute a DNA-binding region (H-T-H motif).

The sequence is that of HTH-type transcriptional regulator SACOL2593 from Staphylococcus aureus (strain COL).